A 209-amino-acid polypeptide reads, in one-letter code: Small ribosomal subunit protein uS3 (209 aa).

Residues 38–107 (IRKVIKSKYA…RFIVNVEEIK (70 aa)) form the KH type-2 domain.

This sequence belongs to the universal ribosomal protein uS3 family. Part of the 30S ribosomal subunit. Forms a tight complex with proteins S10 and S14.

Binds the lower part of the 30S subunit head. Binds mRNA in the 70S ribosome, positioning it for translation. This is Small ribosomal subunit protein uS3 from Thermosipho melanesiensis (strain DSM 12029 / CIP 104789 / BI429).